The following is a 906-amino-acid chain: Cadherin-2 (906 aa).

The signal sequence occupies residues 1–25 (MCRIAGGPRTLLPLLAALLQASLEA). The propeptide occupies 26–159 (SGELALCKTG…HSGALQRQKR (134 aa)). Ser96 is subject to Phosphoserine. 5 Cadherin domains span residues 160 to 267 (DWVI…RPEF), 268 to 382 (LHQV…PPEF), 383 to 497 (TAMT…NPYF), 498 to 603 (APNP…DNAP), and 604 to 717 (QVLP…RIVG). Topologically, residues 160–724 (DWVIPPINLP…IVGAGLGTGT (565 aa)) are extracellular. Residue Glu170 participates in Ca(2+) binding. N-linked (GlcNAc...) asparagine glycosylation is present at Asn190. 7 residues coordinate Ca(2+): Asp226, Glu228, Asp259, Met260, Asn261, Asp262, and Asn263. Asn273 is a glycosylation site (N-linked (GlcNAc...) asparagine). Ca(2+) is bound by residues Asp293, Asp295, and Asn301. A glycan (N-linked (GlcNAc...) asparagine) is linked at Asn325. Asp353 contributes to the Ca(2+) binding site. N-linked (GlcNAc...) asparagine glycans are attached at residues Asn402, Asn572, Asn622, Asn651, and Asn692. A helical transmembrane segment spans residues 725–745 (IIAILLCIIILLILVLMFVVW). Over 746–906 (MKRRDKERQA…LADMYGGGDD (161 aa)) the chain is Cytoplasmic. Residues 863-880 (SGSTAGSLSSLNSSSSGG) show a composition bias toward low complexity. Residues 863–883 (SGSTAGSLSSLNSSSSGGDQD) form a disordered region.

Homodimer (via extracellular region). Can also form heterodimers with other cadherins (via extracellular region). Dimerization occurs in trans, i.e. with a cadherin chain from another cell. Interacts with PCDH8; this complex may also include TAOK2. The interaction with PCDH8 may lead to internalization through TAOK2/p38 MAPK pathway. Identified in a complex containing FGFR4, NCAM1, CDH2, PLCG1, FRS2, SRC, SHC1, GAP43 and CTTN. May interact with OBSCN (via protein kinase domain 2). Interacts with FBXO45. Post-translationally, cleaved by MMP24. Ectodomain cleavage leads to the generation of a soluble 90 kDa N-terminal soluble fragment and a 45 kDa membrane-bound C-terminal fragment 1 (CTF1), which is further cleaved by gamma-secretase into a 35 kDa. Cleavage in neural stem cells by MMP24 affects CDH2-mediated anchorage of neural stem cells to ependymocytes in the adult subependymal zone, leading to modulate neural stem cell quiescence. May be phosphorylated by OBSCN. As to expression, in testis, expressed in Sertoli and germ cells.

Its subcellular location is the cell membrane. The protein resides in the sarcolemma. The protein localises to the cell junction. It localises to the cell surface. It is found in the desmosome. Its subcellular location is the adherens junction. Its function is as follows. Calcium-dependent cell adhesion protein; preferentially mediates homotypic cell-cell adhesion by dimerization with a CDH2 chain from another cell. Cadherins may thus contribute to the sorting of heterogeneous cell types. Acts as a regulator of neural stem cells quiescence by mediating anchorage of neural stem cells to ependymocytes in the adult subependymal zone: upon cleavage by MMP24, CDH2-mediated anchorage is affected, leading to modulate neural stem cell quiescence. Plays a role in cell-to-cell junction formation between pancreatic beta cells and neural crest stem (NCS) cells, promoting the formation of processes by NCS cells. Required for proper neurite branching. Required for pre- and postsynaptic organization. CDH2 may be involved in neuronal recognition mechanism. In hippocampal neurons, may regulate dendritic spine density. In Rattus norvegicus (Rat), this protein is Cadherin-2 (Cdh2).